A 429-amino-acid polypeptide reads, in one-letter code: 3-phosphoshikimate 1-carboxyvinyltransferase (429 aa).

Lysine 20, serine 21, and arginine 25 together coordinate 3-phosphoshikimate. Residue lysine 20 coordinates phosphoenolpyruvate. Glycine 89 and arginine 118 together coordinate phosphoenolpyruvate. Residues serine 164, serine 165, glutamine 166, serine 192, aspartate 311, and lysine 338 each contribute to the 3-phosphoshikimate site. Glutamine 166 contacts phosphoenolpyruvate. Aspartate 311 serves as the catalytic Proton acceptor. The phosphoenolpyruvate site is built by arginine 342 and arginine 384.

The protein belongs to the EPSP synthase family. Monomer.

It is found in the cytoplasm. It catalyses the reaction 3-phosphoshikimate + phosphoenolpyruvate = 5-O-(1-carboxyvinyl)-3-phosphoshikimate + phosphate. The protein operates within metabolic intermediate biosynthesis; chorismate biosynthesis. In terms of biological role, catalyzes the transfer of the enolpyruvyl moiety of phosphoenolpyruvate (PEP) to the 5-hydroxyl of shikimate-3-phosphate (S3P) to produce enolpyruvyl shikimate-3-phosphate and inorganic phosphate. The protein is 3-phosphoshikimate 1-carboxyvinyltransferase of Methanococcus vannielii (strain ATCC 35089 / DSM 1224 / JCM 13029 / OCM 148 / SB).